Here is a 103-residue protein sequence, read N- to C-terminus: Early nodulin-12 (103 aa).

A signal peptide spans 1 to 24; that stretch reads MASFSLSILVFFFSALVLVPQGFA. 2 repeat units span residues 34-38 and 39-43. The 11 X 5 AA approximate tandem repeats of P-P-[QVHR]-[TNKH]-[KED] stretch occupies residues 34–88; it reads PPQTKPPVNKPSHKEPPVNKPPHKEPPVHKPPHKDPPVNKPPQKESPVHKPPRKE. The disordered stretch occupies residues 34–103; that stretch reads PPQTKPPVNK…HPPAEDNIHF (70 aa). A 3; approximate repeat occupies 44–48; it reads PSHKE. Basic and acidic residues predominate over residues 45–103; that stretch reads SHKEPPVNKPPHKEPPVHKPPHKDPPVNKPPQKESPVHKPPRKESPTHRHPPAEDNIHF. Tandem repeats lie at residues 49–53, 54–58, 59–63, 64–68, 69–73, and 74–78. Residues 79–83 form a 10; approximate repeat; the sequence is SPVHK. The stretch at 84-88 is repeat 11; it reads PPRKE.

The protein belongs to the plant proline-rich protein superfamily. ENOD12 family. In terms of tissue distribution, root nodules.

The protein resides in the secreted. Its subcellular location is the cell wall. Functionally, involved in the infection process during the plant-rhizobium interaction. This Medicago truncatula (Barrel medic) protein is Early nodulin-12 (ENOD12).